Consider the following 204-residue polypeptide: Endothelin-3 (204 aa).

A signal peptide spans 1–17; that stretch reads MELRLWFLFGLTVTSAA. The interval 18-71 is disordered; that stretch reads GPVPRPQPGDAGRSGVPRAPSATKETMAMVATRGPSPRSSGQEQEPGPFGELAA. A propeptide spanning residues 18-80 is cleaved from the precursor; sequence GPVPRPQPGD…AKGGPVRYRA (63 aa). Cystine bridges form between cysteine 83/cysteine 97 and cysteine 85/cysteine 93. A propeptide spanning residues 104–204 is cleaved from the precursor; the sequence is INTPERTVPY…KSRTDKARRL (101 aa). Residues 115–140 are disordered; the sequence is LSNHRGSVRGRRSAGPSPQSSQPSRG. Residues 127 to 140 are compositionally biased toward low complexity; the sequence is SAGPSPQSSQPSRG. The endothelin-like stretch occupies residues 144–158; it reads CACAESQDRACVYFC. The disordered stretch occupies residues 166–204; the sequence is GASRTPETPDKEAGKPAGRATGGLHPRRLKSRTDKARRL.

This sequence belongs to the endothelin/sarafotoxin family.

It localises to the secreted. Endothelins are endothelium-derived vasoconstrictor peptides. This chain is Endothelin-3 (EDN3), found in Sus scrofa (Pig).